The sequence spans 154 residues: Myoglobin (154 aa).

One can recognise a Globin domain in the interval 2–148 (GLSDQEWQQV…FRNDMASKYK (147 aa)). His-65 contributes to the nitrite binding site. O2 is bound at residue His-65. His-94 contacts heme b.

This sequence belongs to the globin family. In terms of assembly, monomeric.

It is found in the cytoplasm. The protein localises to the sarcoplasm. The enzyme catalyses Fe(III)-heme b-[protein] + nitric oxide + H2O = Fe(II)-heme b-[protein] + nitrite + 2 H(+). It carries out the reaction H2O2 + AH2 = A + 2 H2O. Its function is as follows. Monomeric heme protein which primary function is to store oxygen and facilitate its diffusion within muscle tissues. Reversibly binds oxygen through a pentacoordinated heme iron and enables its timely and efficient release as needed during periods of heightened demand. Depending on the oxidative conditions of tissues and cells, and in addition to its ability to bind oxygen, it also has a nitrite reductase activity whereby it regulates the production of bioactive nitric oxide. Under stress conditions, like hypoxia and anoxia, it also protects cells against reactive oxygen species thanks to its pseudoperoxidase activity. The chain is Myoglobin (MB) from Gallus gallus (Chicken).